Consider the following 257-residue polypeptide: NAD-capped RNA hydrolase NudC (257 aa).

Arg-69 contributes to the substrate binding site. Positions 98 and 101 each coordinate Zn(2+). Glu-111 contributes to the substrate binding site. The Zn(2+) site is built by Cys-116 and Cys-119. Residue Tyr-124 participates in substrate binding. Positions 125–248 constitute a Nudix hydrolase domain; that stretch reads PQIAPCIIVA…TVARRLIEDT (124 aa). The a divalent metal cation site is built by Ala-158, Glu-174, and Glu-178. The Nudix box signature appears at 159–180; it reads GFVEVGETLEQAVAREVMEESG. 192 to 199 is a binding site for substrate; it reads QPWPFPQS. Glu-219 lines the a divalent metal cation pocket. Residue Ala-241 participates in substrate binding.

This sequence belongs to the Nudix hydrolase family. NudC subfamily. As to quaternary structure, homodimer. Mg(2+) is required as a cofactor. Requires Mn(2+) as cofactor. The cofactor is Zn(2+).

The catalysed reaction is a 5'-end NAD(+)-phospho-ribonucleoside in mRNA + H2O = a 5'-end phospho-adenosine-phospho-ribonucleoside in mRNA + beta-nicotinamide D-ribonucleotide + 2 H(+). It carries out the reaction NAD(+) + H2O = beta-nicotinamide D-ribonucleotide + AMP + 2 H(+). The enzyme catalyses NADH + H2O = reduced beta-nicotinamide D-ribonucleotide + AMP + 2 H(+). Its function is as follows. mRNA decapping enzyme that specifically removes the nicotinamide adenine dinucleotide (NAD) cap from a subset of mRNAs by hydrolyzing the diphosphate linkage to produce nicotinamide mononucleotide (NMN) and 5' monophosphate mRNA. The NAD-cap is present at the 5'-end of some mRNAs and stabilizes RNA against 5'-processing. Has preference for mRNAs with a 5'-end purine. Catalyzes the hydrolysis of a broad range of dinucleotide pyrophosphates. The protein is NAD-capped RNA hydrolase NudC of Klebsiella pneumoniae (strain 342).